Here is a 311-residue protein sequence, read N- to C-terminus: Prohibitin-2 (311 aa).

A helical transmembrane segment spans residues 39–57 (GAGMGLAGLVLLGGAAFVA). The AIM motif lies at 141–144 (YRTL).

Belongs to the prohibitin family. As to quaternary structure, the mitochondrial prohibitin complex consists of two subunits (PHB1 and PHB2). The subunits assemble into a membrane-associated ring-shaped supercomplex of approximately 1 mDa. Interacts with ATG24/SNX4; the interaction is direct and plays a role in mitophagy.

The protein resides in the mitochondrion inner membrane. In terms of biological role, prohibitin probably acts as a holdase/unfoldase for the stabilization of newly synthesized mitochondrial proteins. Involved in mitophagy. Required for the switch to necrotrophic growth. The chain is Prohibitin-2 from Colletotrichum higginsianum (strain IMI 349063) (Crucifer anthracnose fungus).